Consider the following 590-residue polypeptide: CTP synthase (590 aa).

Residues 1 to 278 (MRKHPQSATK…DAFVVRRLNL (278 aa)) are amidoligase domain. Residue serine 20 coordinates CTP. Serine 20 lines the UTP pocket. Residues 21-26 (SLGKGL) and aspartate 78 contribute to the ATP site. 2 residues coordinate Mg(2+): aspartate 78 and glutamate 152. CTP-binding positions include 159-161 (DIE), 199-204 (KTKPTQ), and lysine 235. UTP is bound by residues 199-204 (KTKPTQ) and lysine 235. The Glutamine amidotransferase type-1 domain maps to 303–551 (RIALVGKYVD…VGAAIDYKSA (249 aa)). Glycine 366 contacts L-glutamine. Catalysis depends on cysteine 393, which acts as the Nucleophile; for glutamine hydrolysis. Residues 394-397 (LGLQ), glutamate 416, and arginine 477 contribute to the L-glutamine site. Residues histidine 524 and glutamate 526 contribute to the active site. The segment at 566-590 (EHLPNSSNQHRDGVERSFPAPAARG) is disordered.

Belongs to the CTP synthase family. As to quaternary structure, homotetramer.

The enzyme catalyses UTP + L-glutamine + ATP + H2O = CTP + L-glutamate + ADP + phosphate + 2 H(+). It carries out the reaction L-glutamine + H2O = L-glutamate + NH4(+). The catalysed reaction is UTP + NH4(+) + ATP = CTP + ADP + phosphate + 2 H(+). Its pathway is pyrimidine metabolism; CTP biosynthesis via de novo pathway; CTP from UDP: step 2/2. Its activity is regulated as follows. Allosterically activated by GTP, when glutamine is the substrate; GTP has no effect on the reaction when ammonia is the substrate. The allosteric effector GTP functions by stabilizing the protein conformation that binds the tetrahedral intermediate(s) formed during glutamine hydrolysis. Inhibited by the product CTP, via allosteric rather than competitive inhibition. Its function is as follows. Catalyzes the ATP-dependent amination of UTP to CTP with either L-glutamine or ammonia as the source of nitrogen. Regulates intracellular CTP levels through interactions with the four ribonucleotide triphosphates. The chain is CTP synthase from Mycobacterium leprae (strain Br4923).